The following is a 156-amino-acid chain: Endoribonuclease YbeY (156 aa).

Zn(2+)-binding residues include H122, H126, and H132.

Belongs to the endoribonuclease YbeY family. Requires Zn(2+) as cofactor.

The protein localises to the cytoplasm. Single strand-specific metallo-endoribonuclease involved in late-stage 70S ribosome quality control and in maturation of the 3' terminus of the 16S rRNA. This Bacillus cereus (strain G9842) protein is Endoribonuclease YbeY.